The primary structure comprises 159 residues: 2-C-methyl-D-erythritol 2,4-cyclodiphosphate synthase (159 aa).

A divalent metal cation-binding residues include Asp8 and His10. 4-CDP-2-C-methyl-D-erythritol 2-phosphate contacts are provided by residues 8–10 (DVH) and 34–35 (HS). His42 contributes to the a divalent metal cation binding site. 4-CDP-2-C-methyl-D-erythritol 2-phosphate contacts are provided by residues 56 to 58 (DIG), 61 to 65 (FPDTD), 100 to 106 (AQAPKML), 132 to 135 (TTTE), Phe139, and Arg142.

Belongs to the IspF family. As to quaternary structure, homotrimer. The cofactor is a divalent metal cation.

It carries out the reaction 4-CDP-2-C-methyl-D-erythritol 2-phosphate = 2-C-methyl-D-erythritol 2,4-cyclic diphosphate + CMP. The protein operates within isoprenoid biosynthesis; isopentenyl diphosphate biosynthesis via DXP pathway; isopentenyl diphosphate from 1-deoxy-D-xylulose 5-phosphate: step 4/6. Involved in the biosynthesis of isopentenyl diphosphate (IPP) and dimethylallyl diphosphate (DMAPP), two major building blocks of isoprenoid compounds. Catalyzes the conversion of 4-diphosphocytidyl-2-C-methyl-D-erythritol 2-phosphate (CDP-ME2P) to 2-C-methyl-D-erythritol 2,4-cyclodiphosphate (ME-CPP) with a corresponding release of cytidine 5-monophosphate (CMP). The chain is 2-C-methyl-D-erythritol 2,4-cyclodiphosphate synthase from Salmonella typhi.